Consider the following 362-residue polypeptide: Aminomethyltransferase (362 aa).

Belongs to the GcvT family. The glycine cleavage system is composed of four proteins: P, T, L and H.

The enzyme catalyses N(6)-[(R)-S(8)-aminomethyldihydrolipoyl]-L-lysyl-[protein] + (6S)-5,6,7,8-tetrahydrofolate = N(6)-[(R)-dihydrolipoyl]-L-lysyl-[protein] + (6R)-5,10-methylene-5,6,7,8-tetrahydrofolate + NH4(+). The glycine cleavage system catalyzes the degradation of glycine. The polypeptide is Aminomethyltransferase (Chloroherpeton thalassium (strain ATCC 35110 / GB-78)).